The chain runs to 366 residues: Phospho-N-acetylmuramoyl-pentapeptide-transferase (366 aa).

A run of 10 helical transmembrane segments spans residues 27–47, 76–96, 101–121, 136–156, 176–196, 205–225, 241–261, 264–284, 285–305, and 343–363; these read GAAI…ISLL, PTMG…IWVI, FFWL…WDDF, IKLL…LADP, IDIG…SSNA, GLAA…SYIS, GAGE…GFLW, CYPA…SALG, VVAI…IFVI, and AVTV…LSSL.

The protein belongs to the glycosyltransferase 4 family. MraY subfamily. It depends on Mg(2+) as a cofactor.

The protein localises to the cell inner membrane. The catalysed reaction is UDP-N-acetyl-alpha-D-muramoyl-L-alanyl-gamma-D-glutamyl-meso-2,6-diaminopimeloyl-D-alanyl-D-alanine + di-trans,octa-cis-undecaprenyl phosphate = di-trans,octa-cis-undecaprenyl diphospho-N-acetyl-alpha-D-muramoyl-L-alanyl-D-glutamyl-meso-2,6-diaminopimeloyl-D-alanyl-D-alanine + UMP. It participates in cell wall biogenesis; peptidoglycan biosynthesis. In terms of biological role, catalyzes the initial step of the lipid cycle reactions in the biosynthesis of the cell wall peptidoglycan: transfers peptidoglycan precursor phospho-MurNAc-pentapeptide from UDP-MurNAc-pentapeptide onto the lipid carrier undecaprenyl phosphate, yielding undecaprenyl-pyrophosphoryl-MurNAc-pentapeptide, known as lipid I. The polypeptide is Phospho-N-acetylmuramoyl-pentapeptide-transferase (Methylacidiphilum infernorum (isolate V4) (Methylokorus infernorum (strain V4))).